Here is a 130-residue protein sequence, read N- to C-terminus: Small ribosomal subunit protein uS8 (130 aa).

The protein belongs to the universal ribosomal protein uS8 family. As to quaternary structure, part of the 30S ribosomal subunit. Contacts proteins S5 and S12.

Its function is as follows. One of the primary rRNA binding proteins, it binds directly to 16S rRNA central domain where it helps coordinate assembly of the platform of the 30S subunit. The protein is Small ribosomal subunit protein uS8 of Histophilus somni (strain 129Pt) (Haemophilus somnus).